The sequence spans 169 residues: Nucleoside-triphosphatase THEP1 (169 aa).

ATP-binding positions include 11–18 (GEPGVGKT) and 100–107 (IIGIDEIG).

It belongs to the THEP1 NTPase family.

The enzyme catalyses a ribonucleoside 5'-triphosphate + H2O = a ribonucleoside 5'-diphosphate + phosphate + H(+). Its function is as follows. Has nucleotide phosphatase activity towards ATP, GTP, CTP, TTP and UTP. May hydrolyze nucleoside diphosphates with lower efficiency. This is Nucleoside-triphosphatase THEP1 from Sulfurisphaera tokodaii (strain DSM 16993 / JCM 10545 / NBRC 100140 / 7) (Sulfolobus tokodaii).